A 94-amino-acid polypeptide reads, in one-letter code: Selenoprotein K (94 aa).

A helical transmembrane segment spans residues 20 to 42 (LSFLTDFFWGAVEFIGLFFQTLV). The interval 48–94 (KDGNNSASSRFSDGRGPPGFPGRRRMGRINHGAGPTPPPMGGGGUGR) is disordered. Polar residues predominate over residues 49-58 (DGNNSASSRF). Residue selenocysteine 92 is a non-standard amino acid, selenocysteine.

The protein belongs to the selenoprotein K family.

The protein resides in the endoplasmic reticulum membrane. It localises to the cell membrane. Its function is as follows. Required for Ca(2+) flux in immune cells and plays a role in T-cell proliferation and in T-cell and neutrophil migration. Involved in endoplasmic reticulum-associated degradation (ERAD) of soluble glycosylated proteins. Required for cell surface expression of CD36 and involved in macrophage uptake of low-density lipoprotein and in foam cell formation. Required for palmitoylation. In Danio rerio (Zebrafish), this protein is Selenoprotein K (selenok).